We begin with the raw amino-acid sequence, 268 residues long: Short chain dehydrogenase/reductase dpchG (268 aa).

The NADP(+) site is built by Val-18, Asp-70, Asn-97, Lys-131, Tyr-165, and Lys-169. Residue Tyr-165 is the Proton acceptor of the active site. The Lowers pKa of active site Tyr role is filled by Lys-169.

This sequence belongs to the short-chain dehydrogenases/reductases (SDR) family.

It participates in secondary metabolite biosynthesis; terpenoid biosynthesis. Its function is as follows. Short chain dehydrogenase/reductase; part of the gene cluster that mediates the biosynthesis of the diterpenoid pyrones higginsianins A and B. The first step of the pathway is the synthesis of the alpha-pyrone moiety by the polyketide synthase dpchA via condensation of one acetyl-CoA starter unit with 3 malonyl-CoA units and 2 methylations. The alpha-pyrone is then combined with geranylgeranyl pyrophosphate (GGPP) formed by the GGPP synthase dpchD through the action of the prenyltransferase dpchC to yield a linear alpha-pyrone diterpenoid. Subsequent steps in the diterpenoid pyrone biosynthetic pathway involve the decalin core formation, which is initiated by the epoxidation of the C10-C11 olefin by the FAD-dependent oxidoreductase dpchE, and is followed by a cyclization cascade catalyzed by the terpene cyclase dpchB. The short chain dehydrogenase/reductase dpchG then oxidizes the 8S hydroxy group to a ketone and the short chain dehydrogenase/reductase dpchH reduces the ketone to the 8R hydroxy group to yield higginsianin B. Finally, the FAD-dependent oxidoreductase dpchF converts higginsianin B into higginsianin A. This is Short chain dehydrogenase/reductase dpchG from Colletotrichum higginsianum (strain IMI 349063) (Crucifer anthracnose fungus).